Consider the following 580-residue polypeptide: NADH-quinone oxidoreductase subunit C/D (580 aa).

An NADH dehydrogenase I subunit C region spans residues 1 to 171 (MSFDQVIADA…PPFVLTDRLF (171 aa)). The interval 195–580 (ELMVLNFGPH…IDFVMSDVDR (386 aa)) is NADH dehydrogenase I subunit D.

The protein in the N-terminal section; belongs to the complex I 30 kDa subunit family. It in the C-terminal section; belongs to the complex I 49 kDa subunit family. In terms of assembly, NDH-1 is composed of 13 different subunits. Subunits NuoB, CD, E, F, and G constitute the peripheral sector of the complex.

The protein resides in the cell inner membrane. The enzyme catalyses a quinone + NADH + 5 H(+)(in) = a quinol + NAD(+) + 4 H(+)(out). Functionally, NDH-1 shuttles electrons from NADH, via FMN and iron-sulfur (Fe-S) centers, to quinones in the respiratory chain. The immediate electron acceptor for the enzyme in this species is believed to be ubiquinone. Couples the redox reaction to proton translocation (for every two electrons transferred, four hydrogen ions are translocated across the cytoplasmic membrane), and thus conserves the redox energy in a proton gradient. The protein is NADH-quinone oxidoreductase subunit C/D of Cereibacter sphaeroides (strain ATCC 17025 / ATH 2.4.3) (Rhodobacter sphaeroides).